The following is an 806-amino-acid chain: G-type lectin S-receptor-like serine/threonine-protein kinase At1g61430 (806 aa).

An N-terminal signal peptide occupies residues 1 to 24; it reads MGKKRIVFFAYLPFFTIFMSFSFA. The Bulb-type lectin domain occupies 25–144; sequence GITKESPFSI…VSGRTLWQSF (120 aa). The Extracellular portion of the chain corresponds to 25 to 425; sequence GITKESPFSI…ELDVNKRKMT (401 aa). N-linked (GlcNAc...) asparagine glycosylation is found at Asn53, Asn94, Asn117, and Asn236. One can recognise an EGF-like domain in the interval 277 to 313; that stretch reads PANSCDIYGVCGPFGLCVVSIPPKCKCFKGFVPKFAK. 2 disulfides stabilise this stretch: Cys281–Cys293 and Cys287–Cys301. N-linked (GlcNAc...) asparagine glycans are attached at residues Asn319, Asn335, and Asn374. In terms of domain architecture, PAN spans 332-414; the sequence is CQGNSSGKDA…GELLSIRLAR (83 aa). 2 disulfides stabilise this stretch: Cys367–Cys388 and Cys371–Cys377. A helical membrane pass occupies residues 426-446; that stretch reads IVASTVSLTLFVIFGFAAFGF. Residues 447 to 806 are Cytoplasmic-facing; that stretch reads WRCRVEHNAH…EMTESVIQGR (360 aa). The Protein kinase domain maps to 489–777; it reads FSLSNKLGPG…DLPLPKKPTF (289 aa). Residues 495–503 and Lys520 each bind ATP; that span reads LGPGGFGSV. Residues Ser526 and Ser541 each carry the phosphoserine modification. The interval 581–598 is caM-binding; sequence RKKLELDWPKRFEIIEGI. Asp617 acts as the Proton acceptor in catalysis. A phosphoserine mark is found at Ser621 and Ser634. Thr651 is subject to Phosphothreonine. Phosphoserine occurs at positions 694, 695, and 788.

It belongs to the protein kinase superfamily. Ser/Thr protein kinase family.

It localises to the cell membrane. The enzyme catalyses L-seryl-[protein] + ATP = O-phospho-L-seryl-[protein] + ADP + H(+). It catalyses the reaction L-threonyl-[protein] + ATP = O-phospho-L-threonyl-[protein] + ADP + H(+). The polypeptide is G-type lectin S-receptor-like serine/threonine-protein kinase At1g61430 (Arabidopsis thaliana (Mouse-ear cress)).